The sequence spans 156 residues: Photosystem I reaction center subunit XI (156 aa).

2 helical membrane-spanning segments follow: residues 75 to 95 (GGLL…SLYA) and 128 to 148 (FFIG…ALYF).

Belongs to the PsaL family.

The protein localises to the cellular thylakoid membrane. This chain is Photosystem I reaction center subunit XI, found in Crocosphaera subtropica (strain ATCC 51142 / BH68) (Cyanothece sp. (strain ATCC 51142)).